Consider the following 104-residue polypeptide: Photosystem II reaction center Psb28 protein (104 aa).

Belongs to the Psb28 family. Part of the photosystem II complex.

Its subcellular location is the cellular thylakoid membrane. The sequence is that of Photosystem II reaction center Psb28 protein from Synechococcus sp. (strain JA-2-3B'a(2-13)) (Cyanobacteria bacterium Yellowstone B-Prime).